A 303-amino-acid polypeptide reads, in one-letter code: Recombination-associated protein RdgC (303 aa).

The protein belongs to the RdgC family.

Its subcellular location is the cytoplasm. It localises to the nucleoid. Functionally, may be involved in recombination. This is Recombination-associated protein RdgC from Shewanella frigidimarina (strain NCIMB 400).